We begin with the raw amino-acid sequence, 264 residues long: Phosphonoacetaldehyde hydrolase (264 aa).

The active-site Nucleophile is the aspartate 9. Mg(2+) is bound by residues aspartate 9 and alanine 11. Lysine 50 (schiff-base intermediate with substrate) is an active-site residue. Aspartate 183 contacts Mg(2+).

This sequence belongs to the HAD-like hydrolase superfamily. PhnX family. As to quaternary structure, homodimer. Requires Mg(2+) as cofactor.

The enzyme catalyses phosphonoacetaldehyde + H2O = acetaldehyde + phosphate + H(+). Its function is as follows. Involved in phosphonate degradation. The sequence is that of Phosphonoacetaldehyde hydrolase from Bacillus cereus (strain B4264).